The sequence spans 344 residues: Small neutral protease regulatory protein (344 aa).

Residues 1–60 enclose the HTH lysR-type domain; the sequence is MELEVRHLRALCAIADAGSLHRAARRLGVAQPTLSTQLTRIEQALGGPLFTRERTGCRPT. Positions 20 to 39 form a DNA-binding region, H-T-H motif; that stretch reads LHRAARRLGVAQPTLSTQLT. Residues 322–344 form a disordered region; sequence SCGRAEGSRSRRPRDVAPPRPIG. The span at 327–338 shows a compositional bias: basic and acidic residues; sequence EGSRSRRPRDVA.

It belongs to the LysR transcriptional regulatory family.

Its function is as follows. Transcriptional activator of the gene (snpA) for the small neutral protease. The chain is Small neutral protease regulatory protein (mprR) from Streptomyces lividans.